We begin with the raw amino-acid sequence, 397 residues long: uncharacterized protein (397 aa).

The next 12 membrane-spanning stretches (helical) occupy residues 5-25 (LKIL…LWPL), 43-63 (LVLM…GFLF), 69-89 (FKSI…LVFF), 92-112 (WPAY…VFPA), 131-151 (AIYV…GVVA), 157-177 (YVFL…YFGF), 202-222 (FAAL…YSQW), 233-253 (IGIS…LIVL), 269-289 (LKAQ…MLLT), 293-313 (FPMF…VWPA), 333-353 (FVNS…GVLV), and 360-380 (ALVL…LLYD).

This sequence belongs to the major facilitator superfamily.

Its subcellular location is the cell membrane. This is an uncharacterized protein from Bacillus subtilis (strain 168).